The following is a 489-amino-acid chain: Protein nucleotidyltransferase YdiU (489 aa).

8 residues coordinate ATP: Gly-88, Gly-90, Arg-91, Lys-111, Asp-123, Gly-124, Arg-174, and Arg-181. Residue Asp-250 is the Proton acceptor of the active site. Mg(2+) is bound by residues Asn-251 and Asp-260. Residue Asp-260 participates in ATP binding.

This sequence belongs to the SELO family. Requires Mg(2+) as cofactor. Mn(2+) serves as cofactor.

It carries out the reaction L-seryl-[protein] + ATP = 3-O-(5'-adenylyl)-L-seryl-[protein] + diphosphate. The enzyme catalyses L-threonyl-[protein] + ATP = 3-O-(5'-adenylyl)-L-threonyl-[protein] + diphosphate. It catalyses the reaction L-tyrosyl-[protein] + ATP = O-(5'-adenylyl)-L-tyrosyl-[protein] + diphosphate. The catalysed reaction is L-histidyl-[protein] + UTP = N(tele)-(5'-uridylyl)-L-histidyl-[protein] + diphosphate. It carries out the reaction L-seryl-[protein] + UTP = O-(5'-uridylyl)-L-seryl-[protein] + diphosphate. The enzyme catalyses L-tyrosyl-[protein] + UTP = O-(5'-uridylyl)-L-tyrosyl-[protein] + diphosphate. Nucleotidyltransferase involved in the post-translational modification of proteins. It can catalyze the addition of adenosine monophosphate (AMP) or uridine monophosphate (UMP) to a protein, resulting in modifications known as AMPylation and UMPylation. This Vibrio parahaemolyticus serotype O3:K6 (strain RIMD 2210633) protein is Protein nucleotidyltransferase YdiU.